The chain runs to 241 residues: Acetoacetyl-CoA reductase (241 aa).

NADP(+)-binding positions include 12-14 (RGI) and 82-86 (NAGIT). Substrate-binding positions include aspartate 88 and 141–144 (QMGQ). The active-site Proton acceptor is the tyrosine 147. 177–180 (PGYI) lines the NADP(+) pocket. Substrate is bound at residue 178–179 (GY).

This sequence belongs to the short-chain dehydrogenases/reductases (SDR) family.

It is found in the cytoplasm. The catalysed reaction is a (3R)-3-hydroxyacyl-CoA + NADP(+) = a 3-oxoacyl-CoA + NADPH + H(+). Its pathway is biopolymer metabolism; poly-(R)-3-hydroxybutanoate biosynthesis. The chain is Acetoacetyl-CoA reductase from Shinella zoogloeoides (Crabtreella saccharophila).